Reading from the N-terminus, the 208-residue chain is 3-isopropylmalate dehydratase small subunit 2 (208 aa).

This sequence belongs to the LeuD family. LeuD type 1 subfamily. As to quaternary structure, heterodimer of LeuC and LeuD.

The catalysed reaction is (2R,3S)-3-isopropylmalate = (2S)-2-isopropylmalate. It functions in the pathway amino-acid biosynthesis; L-leucine biosynthesis; L-leucine from 3-methyl-2-oxobutanoate: step 2/4. In terms of biological role, catalyzes the isomerization between 2-isopropylmalate and 3-isopropylmalate, via the formation of 2-isopropylmaleate. This chain is 3-isopropylmalate dehydratase small subunit 2 (leuD2), found in Salmonella typhimurium (strain LT2 / SGSC1412 / ATCC 700720).